Reading from the N-terminus, the 492-residue chain is Glutamyl-tRNA(Gln) amidotransferase subunit A (492 aa).

Active-site charge relay system residues include lysine 78 and serine 158. Catalysis depends on serine 182, which acts as the Acyl-ester intermediate.

The protein belongs to the amidase family. GatA subfamily. As to quaternary structure, heterotrimer of A, B and C subunits.

The catalysed reaction is L-glutamyl-tRNA(Gln) + L-glutamine + ATP + H2O = L-glutaminyl-tRNA(Gln) + L-glutamate + ADP + phosphate + H(+). Functionally, allows the formation of correctly charged Gln-tRNA(Gln) through the transamidation of misacylated Glu-tRNA(Gln) in organisms which lack glutaminyl-tRNA synthetase. The reaction takes place in the presence of glutamine and ATP through an activated gamma-phospho-Glu-tRNA(Gln). This Rhodopseudomonas palustris (strain BisA53) protein is Glutamyl-tRNA(Gln) amidotransferase subunit A.